The primary structure comprises 149 residues: Transcriptional repressor NrdR (149 aa).

Residues 3-34 (CPFCAAVDTKVIDSRLVGDGSQVRRRRQCLVC) fold into a zinc finger. In terms of domain architecture, ATP-cone spans 49 to 139 (PRVIKSDEVR…VYRSFEDIRE (91 aa)).

The protein belongs to the NrdR family. It depends on Zn(2+) as a cofactor.

Negatively regulates transcription of bacterial ribonucleotide reductase nrd genes and operons by binding to NrdR-boxes. This is Transcriptional repressor NrdR from Serratia proteamaculans (strain 568).